A 122-amino-acid polypeptide reads, in one-letter code: SLLQFNKMIKFETRKSGVPFYAAYGCYCGWGGRRPKDPTDRCCFVHDCCYGKLTKCNTKWDIYSYSLKSGYITCGKGTWCKEQICECDRVAAECLRRSLNTYKNEYMFYPDSRCRGPPEYTC.

7 cysteine pairs are disulfide-bonded: Cys26/Cys114, Cys28/Cys43, Cys42/Cys94, Cys48/Cys122, Cys49/Cys87, Cys56/Cys80, and Cys74/Cys85. The Ca(2+) site is built by Tyr27, Gly29, and Gly31. The active site involves His46. Asp47 is a binding site for Ca(2+). Asp88 is a catalytic residue.

Requires Ca(2+) as cofactor. In terms of tissue distribution, expressed by the venom gland.

The protein localises to the secreted. It catalyses the reaction a 1,2-diacyl-sn-glycero-3-phosphocholine + H2O = a 1-acyl-sn-glycero-3-phosphocholine + a fatty acid + H(+). Its activity is regulated as follows. Inhibited by chemical modifications mediated by p-BPB, anhydrous acetic acid and NBSF. Functionally, snake venom phospholipase A2 (PLA2) that has a strong dose-dependent anticoagulant effect. In vivo, intramuscular and intervenal injection causes muscle necrosis. Induces moderate edema in the mouse foot pad. PLA2 catalyzes the calcium-dependent hydrolysis of the 2-acyl groups in 3-sn-phosphoglycerides. The protein is Basic phospholipase A2 10 of Crotalus durissus cumanensis (South American rattlesnake).